The chain runs to 435 residues: Serine hydroxymethyltransferase 2 (435 aa).

(6S)-5,6,7,8-tetrahydrofolate contacts are provided by residues L135 and 139–141; that span reads GHL. An N6-(pyridoxal phosphate)lysine modification is found at K244. E260 serves as a coordination point for (6S)-5,6,7,8-tetrahydrofolate.

It belongs to the SHMT family. In terms of assembly, homodimer. Requires pyridoxal 5'-phosphate as cofactor.

It localises to the cytoplasm. It catalyses the reaction (6R)-5,10-methylene-5,6,7,8-tetrahydrofolate + glycine + H2O = (6S)-5,6,7,8-tetrahydrofolate + L-serine. It participates in one-carbon metabolism; tetrahydrofolate interconversion. The protein operates within amino-acid biosynthesis; glycine biosynthesis; glycine from L-serine: step 1/1. In terms of biological role, catalyzes the reversible interconversion of serine and glycine with tetrahydrofolate (THF) serving as the one-carbon carrier. This reaction serves as the major source of one-carbon groups required for the biosynthesis of purines, thymidylate, methionine, and other important biomolecules. Also exhibits THF-independent aldolase activity toward beta-hydroxyamino acids, producing glycine and aldehydes, via a retro-aldol mechanism. The sequence is that of Serine hydroxymethyltransferase 2 from Vibrio cholerae serotype O1 (strain ATCC 39315 / El Tor Inaba N16961).